Consider the following 394-residue polypeptide: GDNF family receptor alpha-like (394 aa).

A signal peptide spans methionine 1–threonine 18. At serine 19 to glutamate 351 the chain is on the extracellular side. N-linked (GlcNAc...) asparagine glycans are attached at residues asparagine 23, asparagine 50, asparagine 62, asparagine 67, asparagine 103, and asparagine 116. 11 disulfide bridges follow: cysteine 131–cysteine 189, cysteine 138–cysteine 144, cysteine 155–cysteine 167, cysteine 162–cysteine 210, cysteine 191–cysteine 198, cysteine 220–cysteine 291, cysteine 227–cysteine 233, cysteine 244–cysteine 275, cysteine 252–cysteine 258, cysteine 269–cysteine 316, and cysteine 293–cysteine 304. The interval alanine 149–glutamine 228 is required for interaction with GDF15. Residues valine 352 to valine 371 traverse the membrane as a helical segment. Over lysine 372 to leucine 394 the chain is Cytoplasmic.

Belongs to the GDNFR family. As to quaternary structure, interacts (via the extracellular domain) with GDF15 and RET; receptor of GDF15, mediates cellular signaling through interaction with RET after GDF15-binding. Interaction with RET requires previous GDF15-binding. In terms of processing, cleaved and inactivated by MMP14, inhibiting the GDF15-GFRAL aversive response. Expressed in the brainstem, restricted to cells in the area postrema and the immediately adjacent region of the nucleus tractus solitarius (at protein level). Detected at low levels in testis and adipose tissue.

The protein resides in the cell membrane. Specifically inhibited by 3P10 monoclonal antibody. Strongly activated by LY3463251, a long-acting and stable agonist composed of GDF15 conjugated monomeric human IgG4 Fc. Functionally, brainstem-restricted receptor for GDF15 hormone, which triggers an aversive response, characterized by nausea, vomiting, and/or loss of appetite in response to various stresses. The aversive response is both required to reduce continuing exposure to those stresses at the time of exposure and to promote avoidance behavior in the future. The GDF15-GFRAL aversive response is triggered by stresses, such as anticancer drugs (camptothecin or cisplatin), cancers or drugs such as metformin. Upon interaction with its ligand, GDF15, mediates the GDF15-induced autophosphorylation and activation of the RET tyrosine kinase receptor, leading to activation of MAPK- and AKT- signaling pathways. Ligand-binding activates GFRAL-expressing neurons localized in the area postrema and nucleus tractus solitarius of the brainstem. The GDF15-GFRAL signal induces expression of genes involved in metabolism, such as lipid metabolism in adipose tissues. The chain is GDNF family receptor alpha-like from Homo sapiens (Human).